A 483-amino-acid polypeptide reads, in one-letter code: NADH-quinone oxidoreductase subunit N (483 aa).

The next 13 membrane-spanning stretches (helical) occupy residues 9–29 (LVLP…WGAF), 35–55 (PLFT…AVVG), 69–89 (AAAT…IVLG), 104–124 (AVLV…GDLI), 158–178 (FVLG…IYGF), 201–221 (VGLL…VSAA), 234–254 (APTS…MMMF), 272–292 (VLII…LAQT), 297–317 (LWAY…ATGG), 325–345 (LLFM…LQAL), 368–388 (IAVA…FSGF), 404–424 (VLLQ…AFYY), and 449–469 (AVGF…LIWL).

It belongs to the complex I subunit 2 family. As to quaternary structure, NDH-1 is composed of 14 different subunits. Subunits NuoA, H, J, K, L, M, N constitute the membrane sector of the complex.

The protein resides in the cell inner membrane. The catalysed reaction is a quinone + NADH + 5 H(+)(in) = a quinol + NAD(+) + 4 H(+)(out). Its function is as follows. NDH-1 shuttles electrons from NADH, via FMN and iron-sulfur (Fe-S) centers, to quinones in the respiratory chain. The immediate electron acceptor for the enzyme in this species is believed to be ubiquinone. Couples the redox reaction to proton translocation (for every two electrons transferred, four hydrogen ions are translocated across the cytoplasmic membrane), and thus conserves the redox energy in a proton gradient. This Caulobacter sp. (strain K31) protein is NADH-quinone oxidoreductase subunit N.